Here is a 258-residue protein sequence, read N- to C-terminus: MARLRLLLRSARLLGLVALGLGLAAWVSLRERLPGADVTPLRQRLTRWWLARLCAALPFEVRVSGEAPRQPMLWVANHVSWTDIPLLGALAPLTFLSKAEVRAWPLAGWLAEKAGTLFIRRGSGDSRLINQRLAEQLHRGRNLLIFPEGTTTNGESLRTFHGRLMASALEAGVAVQPVAISYRRDGVPDAQAPFIGDDDLLSHLGRLLRGERGSVHIQLLEPIPSQGLDRAELARQAQQAVRLALFGTAAPTQTRRAA.

Residues 7–29 (LLRSARLLGLVALGLGLAAWVSL) traverse the membrane as a helical segment.

It belongs to the 1-acyl-sn-glycerol-3-phosphate acyltransferase family. OlsA subfamily.

It localises to the membrane. The catalysed reaction is a lyso-ornithine lipid + a fatty acyl-[ACP] = an N(2)-[(3R)-3-(acyloxy)acyl]-L-ornithine lipid + holo-[ACP]. Its pathway is lipid metabolism. Catalyzes the second step in the formation of ornithine lipids, which are phosphorus-free membrane lipids. Uses acyl-acyl carrier protein (acyl-AcpP) as an acyl donor and converts lyso-ornithine lipid (LOL) into ornithine lipid (OL). This Pseudomonas aeruginosa (strain ATCC 15692 / DSM 22644 / CIP 104116 / JCM 14847 / LMG 12228 / 1C / PRS 101 / PAO1) protein is Lyso-ornithine lipid O-acyltransferase.